Reading from the N-terminus, the 757-residue chain is MDVNPTLLFLKVPAQNAISTTFPYTGDPPYSHGTGTGYTMDTVNRTHQYSEKGKWTTNTETGAPQLNPIDGPLPEDNEPSGYAQTDCVLEAMAFLEESHPGIFENSCLETMEVVQQTRVDKLTQGRQTYDWTLNRNQPAATALANTIEVFRSNGLTANESGRLIDFLKDVMESMDKEEMEITTHFQRKRRVRDNMTKKMVTQRTIGKKKQRVNKRSYLIRALTLNTMTKDAERGKLKRRAIATPGMQIRGFVYFVETLARSICEKLEQSGLPVGGNEKKAKLANVVRKMMTNSQDTELSFTITGDNTKWNENQNPRMFLAMITYITKNQPEWFRNILSIAPIMFSNKMARLGKGYMFESKRMKLRTQIPAEMLASIDLKYFNESTRKKIEKIRPLLIDGTASLSPGMMMGMFNMLSTVLGVSILNLGQKKYTKTTYWWDGLQSSDDFALIVNAPNHEGIQAGVDRFYRTCKLVGINMSKKKSYINRTGTFEFTSFFYRYGFVANFSMELPSFGVSGINESADMSIGVTVIKNNMINNDLGPATAQMALQLFIKDYRYTYRCHRGDTQIQTRRSFELKKLWEQTRSKAGLLVSDGGPNLYNIRNLHIPEVCLKWELMDEDYQGRLCNPLNPFVSHKEIESVNNAVVMPAHGPAKSMEYDAVATTHSWIPKRNRSILNTSQRGILEDEQMYQKCCNLFEKFFPSSSYRRPVGISSMVEAMVSRARIDARVDFESGRIKKEEFAEIMKICSTIEELRRQK.

Positions 50–82 are disordered; sequence SEKGKWTTNTETGAPQLNPIDGPLPEDNEPSGY. The span at 55–64 shows a compositional bias: polar residues; it reads WTTNTETGAP. Short sequence motifs (nuclear localization signal) lie at residues 187–195 and 203–216; these read RKRRVRDNM and RTIG…NKRS. A promoter-binding site region spans residues 249 to 256; sequence RGFVYFVE. One can recognise a RdRp catalytic domain in the interval 286–483; that stretch reads VRKMMTNSQD…GINMSKKKSY (198 aa).

The protein belongs to the influenza viruses polymerase PB1 family. Influenza RNA polymerase is composed of three subunits: PB1, PB2 and PA. Interacts (via N-terminus) with PA (via C-terminus). Interacts (via C-terminus) with PB2 (via N-terminus); this interaction is essential for transcription initiation. Phosphorylated by host PRKCA.

The protein localises to the host nucleus. Its subcellular location is the host cytoplasm. It catalyses the reaction RNA(n) + a ribonucleoside 5'-triphosphate = RNA(n+1) + diphosphate. In terms of biological role, RNA-dependent RNA polymerase which is responsible for replication and transcription of virus RNA segments. The transcription of viral mRNAs occurs by a unique mechanism called cap-snatching. 5' methylated caps of cellular mRNAs are cleaved after 10-13 nucleotides by PA. In turn, these short capped RNAs are used as primers by PB1 for transcription of viral mRNAs. During virus replication, PB1 initiates RNA synthesis and copy vRNA into complementary RNA (cRNA) which in turn serves as a template for the production of more vRNAs. In Influenza A virus (strain A/Memphis/101/1972 H3N2), this protein is RNA-directed RNA polymerase catalytic subunit.